A 99-amino-acid chain; its full sequence is Large ribosomal subunit protein uL23 (99 aa).

The protein belongs to the universal ribosomal protein uL23 family. Part of the 50S ribosomal subunit. Contacts protein L29, and trigger factor when it is bound to the ribosome.

One of the early assembly proteins it binds 23S rRNA. One of the proteins that surrounds the polypeptide exit tunnel on the outside of the ribosome. Forms the main docking site for trigger factor binding to the ribosome. The polypeptide is Large ribosomal subunit protein uL23 (Shewanella woodyi (strain ATCC 51908 / MS32)).